The following is a 229-amino-acid chain: C-&gt;U-editing enzyme APOBEC-1 (229 aa).

Positions 10–134 (VDPTLRRRIE…QRNRQGLRDL (125 aa)) constitute a CMP/dCMP-type deaminase domain. His61 contributes to the Zn(2+) binding site. Glu63 serves as the catalytic Proton donor. Zn(2+) contacts are provided by Cys93 and Cys96.

It belongs to the cytidine and deoxycytidylate deaminase family. Homodimer. Interacts with A1CF; form an mRNA editing complex. Interacts with RBM47; form an mRNA editing complex. Found in a complex with CELF2/CUGBP2 and A1CF. Interacts with HNRPAB. Interacts with SYNCRIP. Zn(2+) serves as cofactor.

The protein resides in the cytoplasm. It is found in the nucleus. It catalyses the reaction a cytidine in mRNA + H2O + H(+) = a uridine in mRNA + NH4(+). The enzyme catalyses cytidine(6666) in apoB mRNA + H2O + H(+) = uridine(6666) in apoB mRNA + NH4(+). In terms of biological role, cytidine deaminase catalyzing the cytidine to uridine postranscriptional editing of a variety of mRNAs. Form complexes with cofactors that confer differential editing activity and selectivity. Responsible for the postranscriptional editing of a CAA codon for Gln to a UAA codon for stop in the apolipoprotein B mRNA. Also involved in CGA (Arg) to UGA (Stop) editing in the NF1 mRNA. May also play a role in the epigenetic regulation of gene expression by participating in DNA demethylation. This Mesocricetus auratus (Golden hamster) protein is C-&gt;U-editing enzyme APOBEC-1.